Here is a 342-residue protein sequence, read N- to C-terminus: Ketol-acid reductoisomerase (NADP(+)) (342 aa).

Residues 2–182 (AELFYDDDAD…GGLRAAGIKT (181 aa)) enclose the KARI N-terminal Rossmann domain. NADP(+) is bound by residues 25-28 (YGSQ), R48, S51, S53, and 83-86 (DQHQ). H108 is a catalytic residue. G134 lines the NADP(+) pocket. Positions 183–328 (TFTEETETDL…RELRKLFAWV (146 aa)) constitute a KARI C-terminal knotted domain. Mg(2+) is bound by residues D191, E195, E227, and E231. S252 lines the substrate pocket.

The protein belongs to the ketol-acid reductoisomerase family. The cofactor is Mg(2+).

The enzyme catalyses (2R)-2,3-dihydroxy-3-methylbutanoate + NADP(+) = (2S)-2-acetolactate + NADPH + H(+). It catalyses the reaction (2R,3R)-2,3-dihydroxy-3-methylpentanoate + NADP(+) = (S)-2-ethyl-2-hydroxy-3-oxobutanoate + NADPH + H(+). Its pathway is amino-acid biosynthesis; L-isoleucine biosynthesis; L-isoleucine from 2-oxobutanoate: step 2/4. The protein operates within amino-acid biosynthesis; L-valine biosynthesis; L-valine from pyruvate: step 2/4. Involved in the biosynthesis of branched-chain amino acids (BCAA). Catalyzes an alkyl-migration followed by a ketol-acid reduction of (S)-2-acetolactate (S2AL) to yield (R)-2,3-dihydroxy-isovalerate. In the isomerase reaction, S2AL is rearranged via a Mg-dependent methyl migration to produce 3-hydroxy-3-methyl-2-ketobutyrate (HMKB). In the reductase reaction, this 2-ketoacid undergoes a metal-dependent reduction by NADPH to yield (R)-2,3-dihydroxy-isovalerate. The polypeptide is Ketol-acid reductoisomerase (NADP(+)) (Beutenbergia cavernae (strain ATCC BAA-8 / DSM 12333 / CCUG 43141 / JCM 11478 / NBRC 16432 / NCIMB 13614 / HKI 0122)).